The chain runs to 391 residues: Saxitoxin and tetrodotoxin-binding protein 2 (391 aa).

The N-terminal stretch at Met1–Ala20 is a signal peptide. A run of 2 repeats spans residues Pro24 to Ser202 and Pro203 to Asp391. N-linked (GlcNAc...) asparagine glycosylation is found at Asn41, Asn54, Asn63, Asn97, Asn234, Asn268, Asn277, and Asn307.

Homodimer or heterodimer of PSTBP1 and PSTBP2. Glycosylated.

Its subcellular location is the secreted. Functionally, binds both saxitoxin and tetradotoxin. May play a role in toxin accumulation and/or excretion. The sequence is that of Saxitoxin and tetrodotoxin-binding protein 2 (psbp2) from Takifugu pardalis (Panther puffer).